A 159-amino-acid chain; its full sequence is NADH-quinone oxidoreductase subunit I (159 aa).

4Fe-4S ferredoxin-type domains follow at residues 51–80 (RRYENGVERCIACKLCEAICPAQAIVIEAE) and 90–119 (TRYDIDMTKCIYCGLCQEACPVDAIVEGPN). [4Fe-4S] cluster contacts are provided by Cys-60, Cys-63, Cys-66, Cys-70, Cys-99, Cys-102, Cys-105, and Cys-109.

The protein belongs to the complex I 23 kDa subunit family. In terms of assembly, NDH-1 is composed of 14 different subunits. Subunits NuoA, H, J, K, L, M, N constitute the membrane sector of the complex. It depends on [4Fe-4S] cluster as a cofactor.

Its subcellular location is the cell inner membrane. It catalyses the reaction a quinone + NADH + 5 H(+)(in) = a quinol + NAD(+) + 4 H(+)(out). In terms of biological role, NDH-1 shuttles electrons from NADH, via FMN and iron-sulfur (Fe-S) centers, to quinones in the respiratory chain. The immediate electron acceptor for the enzyme in this species is believed to be ubiquinone. Couples the redox reaction to proton translocation (for every two electrons transferred, four hydrogen ions are translocated across the cytoplasmic membrane), and thus conserves the redox energy in a proton gradient. In Rickettsia canadensis (strain McKiel), this protein is NADH-quinone oxidoreductase subunit I.